The primary structure comprises 146 residues: UPF0178 protein BCAH820_3075 (146 aa).

Belongs to the UPF0178 family.

The protein is UPF0178 protein BCAH820_3075 of Bacillus cereus (strain AH820).